Here is a 120-residue protein sequence, read N- to C-terminus: Nitrogen regulatory protein GlnK3 (120 aa).

ADP contacts are provided by residues T40 and 48–50 (GEQ). Residues T40 and 48–50 (GEQ) contribute to the ATP site. Residues 48–52 (GEQKG) and K69 contribute to the 2-oxoglutarate site. Residues V75 and 98–101 (GDGR) contribute to the ADP site. Residues V75 and 98–101 (GDGR) contribute to the ATP site. G98 provides a ligand contact to 2-oxoglutarate.

This sequence belongs to the P(II) protein family. As to quaternary structure, homotrimer. Interacts and forms a complex with Amt3.

Its subcellular location is the cytoplasm. Its activity is regulated as follows. Activity is influenced by intracellular pools of the effector molecules ATP, ADP and 2-oxoglutarate. It senses the cellular nitrogen status through 2-oxoglutarate, and the energy level of the cell by binding both ATP and ADP with different affinities. ATP and 2-oxoglutarate prohibit binding to Amt3. ADP promotes the complex formation. Its function is as follows. Involved in the regulation of nitrogen metabolism. Regulates the activity of its targets by protein-protein interaction in response to the nitrogen status of the cell. Regulates the activity of the ammonia channel Amt3 via direct interaction. This Archaeoglobus fulgidus (strain ATCC 49558 / DSM 4304 / JCM 9628 / NBRC 100126 / VC-16) protein is Nitrogen regulatory protein GlnK3.